The primary structure comprises 111 residues: Large ribosomal subunit protein uL22 (111 aa).

Belongs to the universal ribosomal protein uL22 family. As to quaternary structure, part of the 50S ribosomal subunit.

In terms of biological role, this protein binds specifically to 23S rRNA; its binding is stimulated by other ribosomal proteins, e.g. L4, L17, and L20. It is important during the early stages of 50S assembly. It makes multiple contacts with different domains of the 23S rRNA in the assembled 50S subunit and ribosome. Its function is as follows. The globular domain of the protein is located near the polypeptide exit tunnel on the outside of the subunit, while an extended beta-hairpin is found that lines the wall of the exit tunnel in the center of the 70S ribosome. The protein is Large ribosomal subunit protein uL22 of Xylella fastidiosa (strain 9a5c).